Here is a 469-residue protein sequence, read N- to C-terminus: Cell division protein FtsP (469 aa).

A signal peptide (tat-type signal) is located at residues 1 to 29; that stretch reads MPRLSRRQLLKTAAISTALSTVPAPLLAA. Positions 228 to 286 constitute a Plastocyanin-like domain; sequence IRLRLLNASLARAYDLRLDNDQEMLLIAQDLSFLPKAKSVKSLVLSPGERAEILVNMNE.

It belongs to the FtsP family. In terms of processing, predicted to be exported by the Tat system. The position of the signal peptide cleavage has not been experimentally proven.

The protein resides in the periplasm. Its function is as follows. Cell division protein that is required for growth during stress conditions. May be involved in protecting or stabilizing the divisomal assembly under conditions of stress. This chain is Cell division protein FtsP, found in Haemophilus influenzae (strain 86-028NP).